Reading from the N-terminus, the 280-residue chain is Proteasome subunit beta (280 aa).

A propeptide spans 1–53 (removed in mature form; by autocatalysis); it reads MSEYSAGRSGFSPAYLDRVGSSFTDFLAAAAPHLLPGSRPVPQIPVGNVTPHG. The active-site Nucleophile is T54.

The protein belongs to the peptidase T1B family. As to quaternary structure, the 20S proteasome core is composed of 14 alpha and 14 beta subunits that assemble into four stacked heptameric rings, resulting in a barrel-shaped structure. The two inner rings, each composed of seven catalytic beta subunits, are sandwiched by two outer rings, each composed of seven alpha subunits. The catalytic chamber with the active sites is on the inside of the barrel. Has a gated structure, the ends of the cylinder being occluded by the N-termini of the alpha-subunits. Is capped by the proteasome-associated ATPase, ARC.

The protein localises to the cytoplasm. The enzyme catalyses Cleavage of peptide bonds with very broad specificity.. It participates in protein degradation; proteasomal Pup-dependent pathway. Its activity is regulated as follows. The formation of the proteasomal ATPase ARC-20S proteasome complex, likely via the docking of the C-termini of ARC into the intersubunit pockets in the alpha-rings, may trigger opening of the gate for substrate entry. Interconversion between the open-gate and close-gate conformations leads to a dynamic regulation of the 20S proteasome proteolysis activity. Component of the proteasome core, a large protease complex with broad specificity involved in protein degradation. This chain is Proteasome subunit beta, found in Geodermatophilus obscurus (strain ATCC 25078 / DSM 43160 / JCM 3152 / CCUG 61914 / KCC A-0152 / KCTC 9177 / NBRC 13315 / NRRL B-3577 / G-20).